Here is a 139-residue protein sequence, read N- to C-terminus: Small ribosomal subunit protein uS11 (139 aa).

A disordered region spans residues E118–V139.

It belongs to the universal ribosomal protein uS11 family. As to quaternary structure, part of the 30S ribosomal subunit.

Its function is as follows. Located on the platform of the 30S subunit. In Thermococcus sibiricus (strain DSM 12597 / MM 739), this protein is Small ribosomal subunit protein uS11.